A 138-amino-acid chain; its full sequence is MCKKIMNPSFADLPSSLIEVIMSHLALKNNIRASAACKSWYEVGVSVRVVEKHPWLICFPKRGNLFEFRDPLHWKLYTLGLPELAESTVCYSRFGWLLMRKATSKDVFFFNPFSRDIISLPKCELAFEHITFYCPHIR.

An F-box domain is found at 7-53 (NPSFADLPSSLIEVIMSHLALKNNIRASAACKSWYEVGVSVRVVEKH).

This Arabidopsis thaliana (Mouse-ear cress) protein is F-box protein At4g12382.